We begin with the raw amino-acid sequence, 166 residues long: Cofilin-1 (166 aa).

Alanine 2 bears the N-acetylalanine mark. At serine 3 the chain carries Phosphoserine; by NRK. The region spanning 4–153 is the ADF-H domain; that stretch reads GVAVSDGVIK…KDRCTLAEKL (150 aa). Serine 8 is modified (phosphoserine). Lysine 13 carries the post-translational modification N6-acetyllysine. A Phosphothreonine modification is found at threonine 25. The short motif at 30–34 is the Nuclear localization signal element; sequence KKRKK. At serine 41 the chain carries Phosphoserine. Residue threonine 63 is modified to Phosphothreonine. Position 68 is a phosphotyrosine (tyrosine 68). N6-acetyllysine is present on lysine 73. At tyrosine 82 the chain carries Phosphotyrosine. Position 108 is a phosphoserine (serine 108). Residue lysine 132 forms a Glycyl lysine isopeptide (Lys-Gly) (interchain with G-Cter in SUMO2) linkage. At tyrosine 140 the chain carries Phosphotyrosine. N6-acetyllysine is present on lysine 144. Residue serine 156 is modified to Phosphoserine.

This sequence belongs to the actin-binding proteins ADF family. Can bind G- and F-actin in a 1:1 ratio of cofilin to actin. It is a major component of intranuclear and cytoplasmic actin rods. Interacts with the subcortical maternal complex (SCMC) via interaction with TLE6 isoform 1 and NLRP5. Interacts with C9orf72. In terms of assembly, (Microbial infection) Interacts with human respiratory syncytial virus (HRSV) matrix protein; this interaction probably facilitates viral replication. In terms of processing, inactivated by phosphorylation on Ser-3. Phosphorylated on Ser-3 in resting cells. Dephosphorylated by PDXP/chronophin; this restores its activity in promoting actin filament depolymerization. The phosphorylation of Ser-24 may prevent recognition of the nuclear localization signal. Phosphorylated via a ARRB1-RAC1-LIMK1-PAK1 cascade upon active ligand stimulation of atypical chemokine receptor ACKR2. Widely distributed in various tissues.

Its subcellular location is the nucleus matrix. The protein resides in the cytoplasm. It localises to the cytoskeleton. It is found in the cell projection. The protein localises to the ruffle membrane. Its subcellular location is the lamellipodium membrane. The protein resides in the lamellipodium. It localises to the growth cone. It is found in the axon. In terms of biological role, binds to F-actin and exhibits pH-sensitive F-actin depolymerizing activity. In conjunction with the subcortical maternal complex (SCMC), plays an essential role for zygotes to progress beyond the first embryonic cell divisions via regulation of actin dynamics. Required for the centralization of the mitotic spindle and symmetric division of zygotes. Plays a role in the regulation of cell morphology and cytoskeletal organization in epithelial cells. Required for the up-regulation of atypical chemokine receptor ACKR2 from endosomal compartment to cell membrane, increasing its efficiency in chemokine uptake and degradation. Required for neural tube morphogenesis and neural crest cell migration. This chain is Cofilin-1 (CFL1), found in Homo sapiens (Human).